Reading from the N-terminus, the 347-residue chain is Glycerol-1-phosphate dehydrogenase [NAD(P)+] (347 aa).

Residues Gly-90–Asp-94 and Thr-112–Ser-115 contribute to the NAD(+) site. Asp-117 contacts substrate. Ser-121 contributes to the NAD(+) binding site. Asp-165 contacts substrate. The Zn(2+) site is built by Asp-165 and His-245. His-249 is a substrate binding site. His-262 is a binding site for Zn(2+).

The protein belongs to the glycerol-1-phosphate dehydrogenase family. As to quaternary structure, homodimer. Zn(2+) serves as cofactor.

It localises to the cytoplasm. The catalysed reaction is sn-glycerol 1-phosphate + NAD(+) = dihydroxyacetone phosphate + NADH + H(+). It carries out the reaction sn-glycerol 1-phosphate + NADP(+) = dihydroxyacetone phosphate + NADPH + H(+). Its pathway is membrane lipid metabolism; glycerophospholipid metabolism. Functionally, catalyzes the NAD(P)H-dependent reduction of dihydroxyacetonephosphate (DHAP or glycerone phosphate) to glycerol 1-phosphate (G1P). The G1P thus generated is used as the glycerophosphate backbone of phospholipids in the cellular membranes of Archaea. This chain is Glycerol-1-phosphate dehydrogenase [NAD(P)+], found in Thermofilum pendens (strain DSM 2475 / Hrk 5).